Here is a 104-residue protein sequence, read N- to C-terminus: Large ribosomal subunit protein uL24 (104 aa).

The segment covering 85-96 (IKRELGAKEKAR) has biased composition (basic and acidic residues). Positions 85-104 (IKRELGAKEKARADRRKTAK) are disordered.

It belongs to the universal ribosomal protein uL24 family. In terms of assembly, part of the 50S ribosomal subunit.

Its function is as follows. One of two assembly initiator proteins, it binds directly to the 5'-end of the 23S rRNA, where it nucleates assembly of the 50S subunit. In terms of biological role, one of the proteins that surrounds the polypeptide exit tunnel on the outside of the subunit. This Anaeromyxobacter sp. (strain Fw109-5) protein is Large ribosomal subunit protein uL24.